We begin with the raw amino-acid sequence, 935 residues long: MSAHTYKKFENSTSGDLPDKMTIYQDCMNTFNESPVNSKRCRLLISRLLRLLAQGETFPQNEATALFFSISKLFQHQNDPLRQAVYLAIKELSGISEDVLMATSSIMKDVQNGSDLIKPDAIRSLTYVLDESTAFSAERLLKSAVVSRHPSISSAALCTSYHLLPISEVTIRRFTNETQEAVLDLKQFPNQHGNSEYYPNSTYISQYHALGLLYQLKKTDKMALLKLVRHFSENNSMKNQLAKVELVKIVNDLIYRDPQLFSQFRPLLSDWLSNKFESVQLETAKLITSFATRNSRLVAPELYAAAISALQSLLTVPRVSSRFAALRILNRISMVSPEKIVVCNPELESLINDSNRNISTYAITTLLKTGTSKNISSLISTITNFIHDVSDDFKIIIIDAVRTLSLNFPQEWKSILNFLIDVLKNSEGGFKFKNSIVEALIDIVSFVPQSKELALENLCDFIEDCEFNEILVRILHLLGKEGPSAPNPSLYVRHIYNRVVLENSIIRSAAVVALSKFALTKNDPTLYESIISLLKRIANDKDDEVRDRATIALEFIDSARNKDDVIAQNLIESKYFYDIPSLESKLSSYISSNTDSFATAFDVNQVRKFTEDEMKAINLKRKQEQIFNQKSETTLDTTPEAESVPEKRADANSFAGPNLDDHQEDLLATKYADELLSIEQIKPFGQLVNSSRAISLTEPEAEFVVRGVKHLFKDNVVLQFNITNTLTDIALDNVSVVCTPEISDEAELEELFTLQVDRLLPSEEAACYVAFKKLDEIVMEGFLNNLTFTTKEINPDTNEPFDGDEGFQDEYEIDSIFLNAGDYVKSSFTGNFSATFDELPCEEVAVFNIQEDLSIQEVVDKIILNSSCLPVESTQFAPSDSNSHTLKLFGKSALTGSKVALQIKMIKSSKGLALKVHGKGEDSLLCSDLVNGLMQ.

HEAT repeat units follow at residues 258–296, 337–372, 373–410, 412–449, and 524–562; these read PQLF…RNSR, PEKI…TGTS, KNIS…NFPQ, WKSI…FVPQ, and PTLY…ARNK. The segment at 630–656 is disordered; that stretch reads KSETTLDTTPEAESVPEKRADANSFAG. Thr-638 bears the Phosphothreonine mark. Ser-643 carries the phosphoserine modification. A Glycyl lysine isopeptide (Lys-Gly) (interchain with G-Cter in ubiquitin) cross-link involves residue Lys-647. Phosphoserine is present on Ser-653.

Belongs to the COPG family. As to quaternary structure, oligomeric complex that consists of at least the alpha, beta, beta', gamma, delta, epsilon and zeta subunits. Interacts (via C-terminus) with GEA1 (via N-terminal region) and KEI1 (via C-terminal region).

The protein localises to the cytoplasm. It is found in the golgi apparatus membrane. It localises to the cytoplasmic vesicle. The protein resides in the COPI-coated vesicle membrane. Its subcellular location is the endosome. The coatomer is a cytosolic protein complex that binds to dilysine motifs and reversibly associates with Golgi non-clathrin-coated vesicles, which further mediate biosynthetic protein transport from the ER, via the Golgi up to the trans Golgi network. Coatomer complex is required for budding from Golgi membranes, and is essential for the retrograde Golgi-to-ER transport of dilysine-tagged proteins. The protein is Coatomer subunit gamma (SEC21) of Saccharomyces cerevisiae (strain ATCC 204508 / S288c) (Baker's yeast).